The chain runs to 387 residues: 3-ketoacyl-CoA thiolase (387 aa).

Cys-91 (acyl-thioester intermediate) is an active-site residue. Catalysis depends on proton acceptor residues His-343 and Cys-373.

This sequence belongs to the thiolase-like superfamily. Thiolase family. In terms of assembly, heterotetramer of two alpha chains (FadB) and two beta chains (FadA).

The protein localises to the cytoplasm. It catalyses the reaction an acyl-CoA + acetyl-CoA = a 3-oxoacyl-CoA + CoA. The protein operates within lipid metabolism; fatty acid beta-oxidation. Catalyzes the final step of fatty acid oxidation in which acetyl-CoA is released and the CoA ester of a fatty acid two carbons shorter is formed. The polypeptide is 3-ketoacyl-CoA thiolase (Shewanella frigidimarina (strain NCIMB 400)).